A 416-amino-acid polypeptide reads, in one-letter code: Sulfoquinovosyl glycerol-binding protein SmoF (416 aa).

The N-terminal stretch at 1-29 (MTLKTIRGKALMGAALCATMLTFSGQAFA) is a signal peptide. Glutamine 40 lines the 3-(6-sulfo-alpha-D-quinovosyl)glycerol pocket. 6-sulfo-D-quinovose is bound at residue histidine 41. 3-(6-sulfo-alpha-D-quinovosyl)glycerol contacts are provided by serine 71, aspartate 95, aspartate 141, glycine 194, threonine 248, glycine 303, tryptophan 304, and arginine 373. 6-sulfo-D-quinovose-binding residues include glycine 303, tryptophan 304, and arginine 373.

The protein belongs to the bacterial solute-binding protein 1 family. In terms of assembly, the complex is probably composed of two ATP-binding proteins (SmoE), two transmembrane proteins (SmoG and SmoH) and a solute-binding protein (SmoF).

It is found in the periplasm. In terms of biological role, part of the ABC transporter complex SmoEFGH involved in sulfoquinovosyl glycerol (SQGro) uptake. Binds sulfoquinovosyl glycerol (SQGro). Can also bind sulfoquinovose (SQ), methyl alpha-sulfoquinovoside (SQMe) and a short-chain derivative of sulfoquinovosyl diacylglycerol (SQDG). Cannot bind D-glucose and D-glucuronic acid. In Agrobacterium fabrum (strain C58 / ATCC 33970) (Agrobacterium tumefaciens (strain C58)), this protein is Sulfoquinovosyl glycerol-binding protein SmoF.